The primary structure comprises 482 residues: Aspartyl/glutamyl-tRNA(Asn/Gln) amidotransferase subunit B (482 aa).

Belongs to the GatB/GatE family. GatB subfamily. In terms of assembly, heterotrimer of A, B and C subunits.

It catalyses the reaction L-glutamyl-tRNA(Gln) + L-glutamine + ATP + H2O = L-glutaminyl-tRNA(Gln) + L-glutamate + ADP + phosphate + H(+). The catalysed reaction is L-aspartyl-tRNA(Asn) + L-glutamine + ATP + H2O = L-asparaginyl-tRNA(Asn) + L-glutamate + ADP + phosphate + 2 H(+). Its function is as follows. Allows the formation of correctly charged Asn-tRNA(Asn) or Gln-tRNA(Gln) through the transamidation of misacylated Asp-tRNA(Asn) or Glu-tRNA(Gln) in organisms which lack either or both of asparaginyl-tRNA or glutaminyl-tRNA synthetases. The reaction takes place in the presence of glutamine and ATP through an activated phospho-Asp-tRNA(Asn) or phospho-Glu-tRNA(Gln). This is Aspartyl/glutamyl-tRNA(Asn/Gln) amidotransferase subunit B from Thermotoga sp. (strain RQ2).